Reading from the N-terminus, the 217-residue chain is Large ribosomal subunit protein uL1 (217 aa).

Belongs to the universal ribosomal protein uL1 family.

In Spodoptera frugiperda (Fall armyworm), this protein is Large ribosomal subunit protein uL1 (RpL10A).